Here is a 765-residue protein sequence, read N- to C-terminus: SNF-related serine/threonine-protein kinase (765 aa).

One can recognise a Protein kinase domain in the interval 16-269 (YDLDKTLGRG…LEEIENHPWL (254 aa)). Residues 22–30 (LGRGHFAVV) and lysine 45 contribute to the ATP site. The active-site Proton acceptor is the aspartate 139. Phosphoserine is present on serine 162. Residue threonine 173 is modified to Phosphothreonine; by LKB1. The UBA domain occupies 291-334 (SEEEHNSIIQRMVLGDIADRDAIVEALETNRYNHITATYFLLAE). Residues serine 362, serine 390, serine 482, serine 495, and serine 518 each carry the phosphoserine modification. The tract at residues 512 to 634 (LKMNIASPGT…RCAGPSNSMQ (123 aa)) is disordered. The segment covering 522–532 (VHKRYHRRKSQ) has biased composition (basic residues). Over residues 533-542 (GRGSSCSSSE) the composition is skewed to low complexity. Arginine 534 carries the omega-N-methylarginine modification. Residues 549–558 (ESRRRLDKDS) are compositionally biased toward basic and acidic residues. Gly residues predominate over residues 603–614 (AGGGSPSSGSGG). Serine 607 is modified (phosphoserine).

The protein belongs to the protein kinase superfamily. CAMK Ser/Thr protein kinase family. Requires Mg(2+) as cofactor. Autophosphorylated. Phosphorylation on Thr-173 by STK11/LKB1 in complex with STE20-related adapter-alpha (STRADA) pseudo kinase and CAB39. As to expression, expressed in hematopoietic progenitor cells and leukemic cell lines. Weakly expressed in the testis.

It localises to the nucleus. The enzyme catalyses L-seryl-[protein] + ATP = O-phospho-L-seryl-[protein] + ADP + H(+). It catalyses the reaction L-threonyl-[protein] + ATP = O-phospho-L-threonyl-[protein] + ADP + H(+). Its activity is regulated as follows. Activated by phosphorylation on Thr-173. May play a role in hematopoietic cell proliferation or differentiation. Potential mediator of neuronal apoptosis. The chain is SNF-related serine/threonine-protein kinase from Homo sapiens (Human).